Here is an 827-residue protein sequence, read N- to C-terminus: Cadherin-17 (827 aa).

Positions 1 to 25 (MVSAQLHFLCLLTLYLTCGYGEEGK) are cleaved as a signal peptide. Topologically, residues 26-786 (FSGPLKPMTF…RQDGIPTVGM (761 aa)) are extracellular. Cadherin domains lie at 29–127 (PLKP…TFLQ), 128–243 (SKYE…APEP), 244–339 (VEIR…PPTC), 340–448 (LSPV…IPIF), 449–565 (ETSN…VPVF), 566–666 (PQRI…PPRL), and 667–776 (AKDY…RPAG). N-linked (GlcNAc...) asparagine glycosylation is found at asparagine 148, asparagine 249, asparagine 418, asparagine 545, asparagine 573, asparagine 586, and asparagine 721. A helical membrane pass occupies residues 787–807 (AVGILLTTFLVIGIILAVVFI). Residues 808–827 (RMRKDKVENPQSPENKPLRS) are Cytoplasmic-facing.

As to expression, highest expression is found in intestine with lower expression in spleen, bone marrow, lung and testis. No expression detected in liver, kidney, heart, brain or skeletal muscle. Expressed in precursor B-cells and myeloid cells.

The protein resides in the cell membrane. Its function is as follows. Cadherins are calcium-dependent cell adhesion proteins. They preferentially interact with themselves in a homophilic manner in connecting cells; cadherins may thus contribute to the sorting of heterogeneous cell types. LI-cadherin may have a role in the morphological organization of liver and intestine. The sequence is that of Cadherin-17 (Cdh17) from Mus musculus (Mouse).